We begin with the raw amino-acid sequence, 363 residues long: Chorismate synthase (363 aa).

R47 is an NADP(+) binding site. FMN-binding positions include 124–126 (RAS), G286, 301–305 (KPTAT), and R327.

The protein belongs to the chorismate synthase family. As to quaternary structure, homotetramer. Requires FMNH2 as cofactor.

The catalysed reaction is 5-O-(1-carboxyvinyl)-3-phosphoshikimate = chorismate + phosphate. It participates in metabolic intermediate biosynthesis; chorismate biosynthesis; chorismate from D-erythrose 4-phosphate and phosphoenolpyruvate: step 7/7. In terms of biological role, catalyzes the anti-1,4-elimination of the C-3 phosphate and the C-6 proR hydrogen from 5-enolpyruvylshikimate-3-phosphate (EPSP) to yield chorismate, which is the branch point compound that serves as the starting substrate for the three terminal pathways of aromatic amino acid biosynthesis. This reaction introduces a second double bond into the aromatic ring system. This Prochlorococcus marinus (strain MIT 9211) protein is Chorismate synthase.